The primary structure comprises 428 residues: Adenylosuccinate synthetase (428 aa).

GTP is bound by residues 12 to 18 (GDEGKGK) and 40 to 42 (GHT). D13 (proton acceptor) is an active-site residue. Mg(2+)-binding residues include D13 and G40. IMP is bound by residues 13 to 16 (DEGK), 38 to 41 (NAGH), T128, R142, Q223, T238, and R302. Catalysis depends on H41, which acts as the Proton donor. 298-304 (TTTGRPR) serves as a coordination point for substrate. GTP is bound by residues R304, 330-332 (KLD), and 412-414 (SVG).

Belongs to the adenylosuccinate synthetase family. Homodimer. Mg(2+) is required as a cofactor.

It is found in the cytoplasm. It carries out the reaction IMP + L-aspartate + GTP = N(6)-(1,2-dicarboxyethyl)-AMP + GDP + phosphate + 2 H(+). The protein operates within purine metabolism; AMP biosynthesis via de novo pathway; AMP from IMP: step 1/2. In terms of biological role, plays an important role in the de novo pathway of purine nucleotide biosynthesis. Catalyzes the first committed step in the biosynthesis of AMP from IMP. The sequence is that of Adenylosuccinate synthetase from Desulforamulus reducens (strain ATCC BAA-1160 / DSM 100696 / MI-1) (Desulfotomaculum reducens).